The following is a 772-amino-acid chain: DnaJ homolog subfamily C member 16 (772 aa).

The first 25 residues, methionine 1–alanine 25, serve as a signal peptide directing secretion. Residues leucine 26–glutamate 533 lie on the Cytoplasmic side of the membrane. Residues aspartate 29 to glycine 93 enclose the J domain. Positions phenylalanine 119–proline 245 constitute a Thioredoxin domain. Residues methionine 534–valine 554 form a helical; Anchor for type IV membrane protein membrane-spanning segment. The Extracellular portion of the chain corresponds to glutamine 555–aspartate 772. The tract at residues serine 560–serine 591 is disordered. Positions asparagine 561–lysine 580 are enriched in basic and acidic residues. Asparagine 629 carries an N-linked (GlcNAc...) asparagine glycan.

The protein resides in the endoplasmic reticulum membrane. Functionally, plays an important role in regulating the size of autophagosomes during the formation process. The polypeptide is DnaJ homolog subfamily C member 16 (Dnajc16) (Mus musculus (Mouse)).